We begin with the raw amino-acid sequence, 156 residues long: MPRRREVPKRDVLPDPKFGNVEVAKFMNVLMLDGKKSVAERIVYGAFDQIEKKAGKAPIEVFSVAINNVKPVVEVKSRRVGGANYQVPVEVRPSRRLALAMRWLREAAKKRSEKSMALRLAGELLEASEGRGGAMKKRDEVHRMAEANKAFSHFRF.

The protein belongs to the universal ribosomal protein uS7 family. Part of the 30S ribosomal subunit. Contacts proteins S9 and S11.

Functionally, one of the primary rRNA binding proteins, it binds directly to 16S rRNA where it nucleates assembly of the head domain of the 30S subunit. Is located at the subunit interface close to the decoding center, probably blocks exit of the E-site tRNA. In Cupriavidus necator (strain ATCC 17699 / DSM 428 / KCTC 22496 / NCIMB 10442 / H16 / Stanier 337) (Ralstonia eutropha), this protein is Small ribosomal subunit protein uS7.